The primary structure comprises 336 residues: Putative ataxin-3 homolog (336 aa).

A Josephin domain is found at 10-193 (GGLLYHEVQE…KECPMATEGS (184 aa)). Cys23 functions as the Nucleophile in the catalytic mechanism. His132 serves as the catalytic Proton acceptor. Asn147 is an active-site residue. Residues 244–263 (QEEADLNAAIAASLMDTGGP) enclose the UIM domain. The segment at 281-336 (IESTSGEMSKDGNLEEQGANKSETSEPNSDNIESASGSNPKQNTTSLEGKESIKED) is disordered. The segment covering 299–327 (ANKSETSEPNSDNIESASGSNPKQNTTSL) has biased composition (polar residues).

The protein resides in the nucleus. It catalyses the reaction Thiol-dependent hydrolysis of ester, thioester, amide, peptide and isopeptide bonds formed by the C-terminal Gly of ubiquitin (a 76-residue protein attached to proteins as an intracellular targeting signal).. Functionally, interacts with key regulators of transcription and represses transcription. Acts as a histone-binding protein that regulates transcription. Acts as a deubiquitinating enzyme. The polypeptide is Putative ataxin-3 homolog (Oryza sativa subsp. japonica (Rice)).